The following is a 256-amino-acid chain: tRNA pseudouridine synthase A (256 aa).

Asp52 (nucleophile) is an active-site residue. Tyr110 is a substrate binding site.

Belongs to the tRNA pseudouridine synthase TruA family. In terms of assembly, homodimer.

The enzyme catalyses uridine(38/39/40) in tRNA = pseudouridine(38/39/40) in tRNA. Its function is as follows. Formation of pseudouridine at positions 38, 39 and 40 in the anticodon stem and loop of transfer RNAs. The protein is tRNA pseudouridine synthase A of Stenotrophomonas maltophilia (strain K279a).